Here is a 422-residue protein sequence, read N- to C-terminus: Dihydrolipoyllysine-residue succinyltransferase component of 2-oxoglutarate dehydrogenase complex (422 aa).

Residues 1–76 (MPEVKVPELA…EVGQAIAIIG (76 aa)) form the Lipoyl-binding domain. An N6-lipoyllysine modification is found at K42. Residues 77–184 (EGSGNASKEN…APAKEEKKYN (108 aa)) are disordered. Polar residues-rich tracts occupy residues 80-94 (GNAS…TPQQ) and 116-130 (NQAN…NATP). In terms of domain architecture, Peripheral subunit-binding (PSBD) spans 127 to 163 (NATPSARRYARENGVNLAEVSPKTNDVVRKEDIDKKQ). Residues 152 to 163 (DVVRKEDIDKKQ) are compositionally biased toward basic and acidic residues. Residues 164-176 (QAPASTQTTQQAP) show a composition bias toward low complexity. Active-site residues include H393 and D397.

Belongs to the 2-oxoacid dehydrogenase family. Forms a 24-polypeptide structural core with octahedral symmetry. Part of the 2-oxoglutarate dehydrogenase (OGDH) complex composed of E1 (2-oxoglutarate dehydrogenase), E2 (dihydrolipoamide succinyltransferase) and E3 (dihydrolipoamide dehydrogenase); the complex contains multiple copies of the three enzymatic components (E1, E2 and E3). The cofactor is (R)-lipoate.

It catalyses the reaction N(6)-[(R)-dihydrolipoyl]-L-lysyl-[protein] + succinyl-CoA = N(6)-[(R)-S(8)-succinyldihydrolipoyl]-L-lysyl-[protein] + CoA. Its pathway is amino-acid degradation; L-lysine degradation via saccharopine pathway; glutaryl-CoA from L-lysine: step 6/6. Functionally, E2 component of the 2-oxoglutarate dehydrogenase (OGDH) complex which catalyzes the second step in the conversion of 2-oxoglutarate to succinyl-CoA and CO(2). The protein is Dihydrolipoyllysine-residue succinyltransferase component of 2-oxoglutarate dehydrogenase complex (odhB) of Staphylococcus aureus (strain Mu50 / ATCC 700699).